We begin with the raw amino-acid sequence, 387 residues long: Pepsin II-1 (387 aa).

The first 15 residues, 1–15 (MKWLLLLGLLALSEC), serve as a signal peptide directing secretion. The propeptide at 16 to 59 (IVHKVPLVRKKSLRKNLIEKGLLQDYLKTHTPNLATKYFPKETF) is activation peptide. Positions 75–384 (YFGTISIGTP…DRANNQVGLA (310 aa)) constitute a Peptidase A1 domain. Residue aspartate 93 is part of the active site. A disulfide bridge links cysteine 106 with cysteine 111. The residue at position 129 (serine 129) is a Phosphoserine. A disulfide bridge links cysteine 267 with cysteine 271. Residue aspartate 276 is part of the active site. Cysteine 310 and cysteine 343 are disulfide-bonded.

The protein belongs to the peptidase A1 family.

The protein resides in the secreted. It catalyses the reaction Preferential cleavage: hydrophobic, preferably aromatic, residues in P1 and P1' positions. Cleaves 1-Phe-|-Val-2, 4-Gln-|-His-5, 13-Glu-|-Ala-14, 14-Ala-|-Leu-15, 15-Leu-|-Tyr-16, 16-Tyr-|-Leu-17, 23-Gly-|-Phe-24, 24-Phe-|-Phe-25 and 25-Phe-|-Tyr-26 bonds in the B chain of insulin.. Shows particularly broad specificity; although bonds involving phenylalanine and leucine are preferred, many others are also cleaved to some extent. This is Pepsin II-1 from Oryctolagus cuniculus (Rabbit).